Reading from the N-terminus, the 386-residue chain is uncharacterized protein (386 aa).

12 consecutive transmembrane segments (helical) span residues 8-28 (VFVIWITTFTTMLGVGFIAPI), 43-63 (IGLIFGSFALARTVAQIPVGV), 79-99 (FFYGVSTLMYNFVSTVLGFLI), 102-122 (IFTGIFSAFVTPVAGSYIAAI), 134-154 (IFNSAITLGFGIGPFIGGILA), 156-176 (MYGIKMPFYFCGFLGILAAII), 216-236 (FIINVSNVMINAGIYAYLALY), 241-261 (NITISQVGFMIALTNILMALL), 272-292 (LGNIMIIIGIFIISFGMYLLS), 297-317 (FLTILASLTIIAVGSSISSTA), 342-362 (INIGMFIGAVSFGFLADILGI), and 365-385 (MYKFSAIFSIVVGIISYLRIE).

It belongs to the major facilitator superfamily.

It localises to the cell membrane. This is an uncharacterized protein from Methanocaldococcus jannaschii (strain ATCC 43067 / DSM 2661 / JAL-1 / JCM 10045 / NBRC 100440) (Methanococcus jannaschii).